The following is a 354-amino-acid chain: Uroporphyrinogen decarboxylase (354 aa).

Substrate is bound by residues 27-31, Asp-77, Tyr-153, Thr-208, and His-326; that span reads RQAGR.

The protein belongs to the uroporphyrinogen decarboxylase family. In terms of assembly, homodimer.

The protein resides in the cytoplasm. The catalysed reaction is uroporphyrinogen III + 4 H(+) = coproporphyrinogen III + 4 CO2. It functions in the pathway porphyrin-containing compound metabolism; protoporphyrin-IX biosynthesis; coproporphyrinogen-III from 5-aminolevulinate: step 4/4. Its function is as follows. Catalyzes the decarboxylation of four acetate groups of uroporphyrinogen-III to yield coproporphyrinogen-III. The polypeptide is Uroporphyrinogen decarboxylase (Neisseria gonorrhoeae (strain NCCP11945)).